The sequence spans 909 residues: Protein translocase subunit SecA (909 aa).

ATP-binding positions include Q87 and 105-109 (GEGKT). A disordered region spans residues 246 to 265 (LEQQEKEDEEGKNGDGDYTI). The segment covering 254–265 (EEGKNGDGDYTI) has biased composition (basic and acidic residues). D512 contributes to the ATP binding site. A compositionally biased stretch (basic and acidic residues) spans 834–858 (ESDVEAVEEQRRQADEQPKQYEHET). Residues 834–899 (ESDVEAVEEQ…NDPCPCGSGL (66 aa)) are disordered. The span at 859-875 (ASATQAPEQAPEAAPAA) shows a compositional bias: low complexity. Residues C893, C895, C904, and H905 each coordinate Zn(2+).

Belongs to the SecA family. Monomer and homodimer. Part of the essential Sec protein translocation apparatus which comprises SecA, SecYEG and auxiliary proteins SecDF-YajC and YidC. The cofactor is Zn(2+).

Its subcellular location is the cell inner membrane. The protein localises to the cytoplasm. It catalyses the reaction ATP + H2O + cellular proteinSide 1 = ADP + phosphate + cellular proteinSide 2.. Its function is as follows. Part of the Sec protein translocase complex. Interacts with the SecYEG preprotein conducting channel. Has a central role in coupling the hydrolysis of ATP to the transfer of proteins into and across the cell membrane, serving both as a receptor for the preprotein-SecB complex and as an ATP-driven molecular motor driving the stepwise translocation of polypeptide chains across the membrane. This Pseudoalteromonas atlantica (strain T6c / ATCC BAA-1087) protein is Protein translocase subunit SecA.